Consider the following 687-residue polypeptide: Protein Smaug homolog 2 (687 aa).

The span at 160 to 172 (TRPEPSYHSRQGS) shows a compositional bias: basic and acidic residues. The interval 160–301 (TRPEPSYHSR…NTFQEDGSGM (142 aa)) is disordered. Residue serine 172 is modified to Phosphoserine. 2 stretches are compositionally biased toward low complexity: residues 175–190 (WGGPAELAPGEAGPGW) and 200–211 (HVPFHPSSSVPP). Residues 215–224 (SIGSNANTGL) are compositionally biased toward polar residues. Residues serine 271, serine 278, serine 279, and serine 281 each carry the phosphoserine modification. Residues 278-290 (SSGSEQTEEQGSS) are compositionally biased toward low complexity. One can recognise an SAM domain in the interval 299-372 (SGMKDVPSWL…LKSLEKDVLE (74 aa)). The residue at position 400 (threonine 400) is a Phosphothreonine. The disordered stretch occupies residues 402 to 464 (TAKDEGRGEP…APAPVADGDI (63 aa)). Residues 424 to 435 (GSDKGTEAKDPP) show a composition bias toward basic and acidic residues. Residues 448-461 (PSDSSEPAPAPVAD) are compositionally biased toward low complexity. A phosphoserine mark is found at serine 548, serine 550, serine 556, serine 585, and serine 593. Arginine 595 carries the post-translational modification Asymmetric dimethylarginine. The segment at 600-636 (SPSLGGQGRQNLWFANPGGSNSMPSQSRSSVQRTHSL) is disordered. The span at 617-636 (GGSNSMPSQSRSSVQRTHSL) shows a compositional bias: polar residues. Serine 621 carries the phosphoserine modification.

This sequence belongs to the SMAUG family.

The protein localises to the cytoplasm. Its subcellular location is the nucleus. In terms of biological role, has transcriptional repressor activity. Overexpression inhibits the transcriptional activities of AP-1, p53/TP53 and CDKN1A. This is Protein Smaug homolog 2 (Samd4b) from Mus musculus (Mouse).